We begin with the raw amino-acid sequence, 409 residues long: MKLLYIFEKNIILRKILITFSLIIIFLLGRYVPIPGVLISAYKGQDNNFATLYSTVTGGNLSQVGVFSLGIGPMMTTMILLRLFTIGKYSSGVSQKVQQFRQNVVMLVIAIIQGLAIAISFQYHNGFSLTKLLLATMILVTGAYIISWIGNLNAEYGFGGMTILVVVGMLVGQFNNIPLIFELFQDGYQLAIILFLLWTLVAMYLMITFERSEYRIPVMRTSIHNRLVDDAYMPIKVNASGGMAFMYVYTLLMFPQYIIILLRSIFPTNPDITSYNDYFSLSSIQGVVIYMILMLVLSVAFTFVNIDPTKISEAMRESGDFIPNYRPGKETQSYLSKICYLFGTFSGFFMAFLGGVPLLFALGNDDLRTVSSMTGIFMMITGMSFMILDEFQVIRIRKQYTSVFENEEN.

10 helical membrane passes run 16–36 (ILITFSLIIIFLLGRYVPIPG), 61–81 (LSQVGVFSLGIGPMMTTMILL), 104–124 (VVMLVIAIIQGLAIAISFQYH), 132–152 (LLLATMILVTGAYIISWIGNL), 161–181 (MTILVVVGMLVGQFNNIPLIF), 190–210 (LAIILFLLWTLVAMYLMITFE), 242–262 (GMAFMYVYTLLMFPQYIIILL), 286–306 (GVVIYMILMLVLSVAFTFVNI), 341–361 (LFGTFSGFFMAFLGGVPLLFA), and 374–394 (TGIFMMITGMSFMILDEFQVI).

Belongs to the SecY/SEC61-alpha family. SecY2 subfamily. Component of the accessory SecA2/SecY2 protein translocase complex required to export cell wall proteins. May form heterotrimers with SecE and SecG subunits.

Its subcellular location is the cell membrane. Part of the accessory SecA2/SecY2 system specifically required for export of possible cell wall proteins. The central subunit of a protein translocation channel. This chain is Accessory Sec system protein translocase subunit SecY2, found in Streptococcus agalactiae serotype III (strain NEM316).